A 206-amino-acid chain; its full sequence is Urease accessory protein UreG (206 aa).

12 to 19 (GPVGSGKT) provides a ligand contact to GTP.

Belongs to the SIMIBI class G3E GTPase family. UreG subfamily. In terms of assembly, homodimer. UreD, UreF and UreG form a complex that acts as a GTP-hydrolysis-dependent molecular chaperone, activating the urease apoprotein by helping to assemble the nickel containing metallocenter of UreC. The UreE protein probably delivers the nickel.

Its subcellular location is the cytoplasm. Facilitates the functional incorporation of the urease nickel metallocenter. This process requires GTP hydrolysis, probably effectuated by UreG. This Synechocystis sp. (strain ATCC 27184 / PCC 6803 / Kazusa) protein is Urease accessory protein UreG.